Reading from the N-terminus, the 89-residue chain is Large ribosomal subunit protein bL27 (89 aa).

The segment at 1 to 20 (MAHKKAGGSSRNGRDSAGQR) is disordered.

The protein belongs to the bacterial ribosomal protein bL27 family.

The polypeptide is Large ribosomal subunit protein bL27 (Paramagnetospirillum magneticum (strain ATCC 700264 / AMB-1) (Magnetospirillum magneticum)).